A 152-amino-acid polypeptide reads, in one-letter code: Large ribosomal subunit protein uL15 (152 aa).

The disordered stretch occupies residues 1-56 (MELNTLKPAKNSVKQNTRYGRGQGSGKGGTSTRGHKGAKSRSGYKSKPGFEGGQLP). The span at 21–31 (RGQGSGKGGTS) shows a compositional bias: gly residues. The segment covering 33 to 44 (RGHKGAKSRSGY) has biased composition (basic residues).

Belongs to the universal ribosomal protein uL15 family. In terms of assembly, part of the 50S ribosomal subunit.

Functionally, binds to the 23S rRNA. The sequence is that of Large ribosomal subunit protein uL15 from Amoebophilus asiaticus (strain 5a2).